Consider the following 267-residue polypeptide: Cilia- and flagella-associated protein 300 (267 aa).

This sequence belongs to the CFAP300 family. In terms of assembly, interacts with DNAAF2.

The protein resides in the cytoplasm. Its subcellular location is the cytoskeleton. It is found in the cilium axoneme. Functionally, cilium- and flagellum-specific protein that plays a role in axonemal structure organization and motility. May play a role in outer and inner dynein arm assembly. The chain is Cilia- and flagella-associated protein 300 from Rattus norvegicus (Rat).